The chain runs to 335 residues: Ferredoxin--NADP reductase (335 aa).

FAD is bound by residues aspartate 34, glutamine 42, tyrosine 47, alanine 87, phenylalanine 121, aspartate 287, and threonine 328.

This sequence belongs to the ferredoxin--NADP reductase type 2 family. In terms of assembly, homodimer. Requires FAD as cofactor.

The enzyme catalyses 2 reduced [2Fe-2S]-[ferredoxin] + NADP(+) + H(+) = 2 oxidized [2Fe-2S]-[ferredoxin] + NADPH. This chain is Ferredoxin--NADP reductase, found in Rickettsia felis (strain ATCC VR-1525 / URRWXCal2) (Rickettsia azadi).